An 832-amino-acid chain; its full sequence is Translation initiation factor IF-2 (832 aa).

Basic and acidic residues predominate over residues 1–10 (MLMSDVEKFG). 3 disordered regions span residues 1 to 87 (MLMS…SRSA), 120 to 148 (RDEEEVEVAPPEGESVIDEPDSVKEPAAA), and 163 to 201 (IAPGAAGTRPGRGGHDDKGKRYSYQGAGGKIKEKEGGGG). A compositionally biased stretch (gly residues) spans 11 to 20 (GDCGSSGGSG). Polar residues-rich tracts occupy residues 29-42 (RASTLAKTPTSTGG) and 71-87 (SPYTSDDNRQGQISRSA). The tr-type G domain occupies 331–500 (PRPPVVTVMG…LLLAEMLELR (170 aa)). The interval 340–347 (GHVDHGKT) is G1. 340–347 (GHVDHGKT) lines the GTP pocket. The G2 stretch occupies residues 365 to 369 (GITQH). Residues 386–389 (DTPG) are G3. GTP contacts are provided by residues 386–390 (DTPGH) and 440–443 (NKID). Residues 440 to 443 (NKID) are G4. Residues 476 to 478 (SAK) form a G5 region.

Belongs to the TRAFAC class translation factor GTPase superfamily. Classic translation factor GTPase family. IF-2 subfamily.

The protein resides in the cytoplasm. Functionally, one of the essential components for the initiation of protein synthesis. Protects formylmethionyl-tRNA from spontaneous hydrolysis and promotes its binding to the 30S ribosomal subunits. Also involved in the hydrolysis of GTP during the formation of the 70S ribosomal complex. The sequence is that of Translation initiation factor IF-2 from Anaplasma marginale (strain St. Maries).